Consider the following 191-residue polypeptide: Transcription factor E (191 aa).

Residues 4–87 enclose the HTH TFE/IIEalpha-type domain; that stretch reads RNKELLEIGR…YWHIETKRLP (84 aa). The tract at residues 170–191 is disordered; the sequence is APPKKEKKGKKSKKRSKKSKKK. A compositionally biased stretch (basic residues) spans 174-191; sequence KEKKGKKSKKRSKKSKKK.

This sequence belongs to the TFE family. Monomer. Interaction with RNA polymerase subunits RpoF and RpoE is necessary for Tfe stimulatory transcription activity. Able to interact with Tbp and RNA polymerase in the absence of DNA promoter. Interacts both with the preinitiation and elongation complexes.

Transcription factor that plays a role in the activation of archaeal genes transcribed by RNA polymerase. Facilitates transcription initiation by enhancing TATA-box recognition by TATA-box-binding protein (Tbp), and transcription factor B (Tfb) and RNA polymerase recruitment. Not absolutely required for transcription in vitro, but particularly important in cases where Tbp or Tfb function is not optimal. It dynamically alters the nucleic acid-binding properties of RNA polymerases by stabilizing the initiation complex and destabilizing elongation complexes. Seems to translocate with the RNA polymerase following initiation and acts by binding to the non template strand of the transcription bubble in elongation complexes. This Pyrococcus horikoshii (strain ATCC 700860 / DSM 12428 / JCM 9974 / NBRC 100139 / OT-3) protein is Transcription factor E.